We begin with the raw amino-acid sequence, 421 residues long: MDKLIITGGPRLDGEIRISGAKNAALPILAATLLADGPVTVGNLPHLHDITTMIELFGRMGIEPVIDEKLAVEIDPRTIKTLVAPYELVKTMRASILVLGPMVARFGEAEVALPGGCAIGSRPVDLHIRGLEAMGAKIEVEGGYIKAKAPEGGLRGAHFFFDTVSVTGTENIMMAAALAKGRSVLQNAAREPEVVDLANFINAMGGKVQGAGTDTITIDGVERLASATYRVMPDRIETGTYLVAAAVTGGRVKVKDTDPTILEAVLEKLKEAGADITTGEDWIELDMHGKRPKAVNLRTAPYPAFPTDMQAQFISLNAIAEGTGAVIETIFENRFMHVYEMHRMGAQIQVEGNTAIVTGVKALKGAPVMATDLRASASLVLSALVAEGDTLIDRIYHIDRGYECIEEKLQMLGAKIRRVPG.

Position 22-23 (22-23 (KN)) interacts with phosphoenolpyruvate. Arg93 is a UDP-N-acetyl-alpha-D-glucosamine binding site. The Proton donor role is filled by Cys117. At Cys117 the chain carries 2-(S-cysteinyl)pyruvic acid O-phosphothioketal. UDP-N-acetyl-alpha-D-glucosamine is bound by residues 122-126 (RPVDL), Asp308, and Ile330.

This sequence belongs to the EPSP synthase family. MurA subfamily.

It localises to the cytoplasm. The catalysed reaction is phosphoenolpyruvate + UDP-N-acetyl-alpha-D-glucosamine = UDP-N-acetyl-3-O-(1-carboxyvinyl)-alpha-D-glucosamine + phosphate. It participates in cell wall biogenesis; peptidoglycan biosynthesis. Functionally, cell wall formation. Adds enolpyruvyl to UDP-N-acetylglucosamine. This chain is UDP-N-acetylglucosamine 1-carboxyvinyltransferase, found in Pseudomonas entomophila (strain L48).